A 326-amino-acid chain; its full sequence is Acetyl-coenzyme A carboxylase carboxyl transferase subunit alpha (326 aa).

Residues 44 to 298 (QLESRAEQLR…KEALLFHLNT (255 aa)) enclose the CoA carboxyltransferase C-terminal domain.

The protein belongs to the AccA family. In terms of assembly, acetyl-CoA carboxylase is a heterohexamer composed of biotin carboxyl carrier protein (AccB), biotin carboxylase (AccC) and two subunits each of ACCase subunit alpha (AccA) and ACCase subunit beta (AccD).

Its subcellular location is the cytoplasm. The catalysed reaction is N(6)-carboxybiotinyl-L-lysyl-[protein] + acetyl-CoA = N(6)-biotinyl-L-lysyl-[protein] + malonyl-CoA. It functions in the pathway lipid metabolism; malonyl-CoA biosynthesis; malonyl-CoA from acetyl-CoA: step 1/1. Component of the acetyl coenzyme A carboxylase (ACC) complex. First, biotin carboxylase catalyzes the carboxylation of biotin on its carrier protein (BCCP) and then the CO(2) group is transferred by the carboxyltransferase to acetyl-CoA to form malonyl-CoA. This is Acetyl-coenzyme A carboxylase carboxyl transferase subunit alpha from Synechocystis sp. (strain ATCC 27184 / PCC 6803 / Kazusa).